The sequence spans 322 residues: Quinolinate synthase (322 aa).

2 residues coordinate iminosuccinate: His36 and Ser53. A [4Fe-4S] cluster-binding site is contributed by Cys98. Residues 124-126 (YIN) and Ser141 each bind iminosuccinate. Cys184 provides a ligand contact to [4Fe-4S] cluster. Residues 210–212 (HPE) and Thr227 contribute to the iminosuccinate site. Cys278 is a [4Fe-4S] cluster binding site.

The protein belongs to the quinolinate synthase family. Type 2 subfamily. [4Fe-4S] cluster serves as cofactor.

The protein resides in the cytoplasm. The enzyme catalyses iminosuccinate + dihydroxyacetone phosphate = quinolinate + phosphate + 2 H2O + H(+). The protein operates within cofactor biosynthesis; NAD(+) biosynthesis; quinolinate from iminoaspartate: step 1/1. In terms of biological role, catalyzes the condensation of iminoaspartate with dihydroxyacetone phosphate to form quinolinate. The chain is Quinolinate synthase from Chloroherpeton thalassium (strain ATCC 35110 / GB-78).